A 214-amino-acid chain; its full sequence is Large ribosomal subunit protein uL3 (214 aa).

The protein belongs to the universal ribosomal protein uL3 family. In terms of assembly, part of the 50S ribosomal subunit. Forms a cluster with proteins L14 and L19.

In terms of biological role, one of the primary rRNA binding proteins, it binds directly near the 3'-end of the 23S rRNA, where it nucleates assembly of the 50S subunit. This is Large ribosomal subunit protein uL3 from Streptomyces coelicolor (strain ATCC BAA-471 / A3(2) / M145).